The sequence spans 197 residues: ATP synthase subunit delta (197 aa).

The segment covering 1-16 has biased composition (low complexity); that stretch reads MSSAVSASPQAASPQQ. The segment at 1-20 is disordered; the sequence is MSSAVSASPQAASPQQDRTS.

It belongs to the ATPase delta chain family. As to quaternary structure, F-type ATPases have 2 components, F(1) - the catalytic core - and F(0) - the membrane proton channel. F(1) has five subunits: alpha(3), beta(3), gamma(1), delta(1), epsilon(1). F(0) has three main subunits: a(1), b(2) and c(10-14). The alpha and beta chains form an alternating ring which encloses part of the gamma chain. F(1) is attached to F(0) by a central stalk formed by the gamma and epsilon chains, while a peripheral stalk is formed by the delta and b chains.

It localises to the cell inner membrane. In terms of biological role, f(1)F(0) ATP synthase produces ATP from ADP in the presence of a proton or sodium gradient. F-type ATPases consist of two structural domains, F(1) containing the extramembraneous catalytic core and F(0) containing the membrane proton channel, linked together by a central stalk and a peripheral stalk. During catalysis, ATP synthesis in the catalytic domain of F(1) is coupled via a rotary mechanism of the central stalk subunits to proton translocation. This protein is part of the stalk that links CF(0) to CF(1). It either transmits conformational changes from CF(0) to CF(1) or is implicated in proton conduction. This is ATP synthase subunit delta from Acidiphilium cryptum (strain JF-5).